A 195-amino-acid chain; its full sequence is Peroxiredoxin (195 aa).

A Thioredoxin domain is found at 4–162 (AMIGKPAPEF…TLRLVQAFQF (159 aa)). C49 acts as the Cysteine sulfenic acid (-SOH) intermediate in catalysis.

The protein belongs to the peroxiredoxin family. AhpC/Prx1 subfamily. As to quaternary structure, homodimer; disulfide-linked, upon oxidation.

The catalysed reaction is a hydroperoxide + [thioredoxin]-dithiol = an alcohol + [thioredoxin]-disulfide + H2O. Functionally, thiol-specific peroxidase that catalyzes the reduction of hydrogen peroxide and organic hydroperoxides to water and alcohols, respectively. Plays a role in cell protection against oxidative stress by detoxifying peroxides and as sensor of hydrogen peroxide-mediated signaling events. The polypeptide is Peroxiredoxin (Ascaris suum (Pig roundworm)).